The sequence spans 465 residues: MFIYDTKLKQKVPFEPLVQNKANIYVCGPTVYDDAHLGHARSAIAFDLLRRTLELSGYEVMLVRNFTDIDDKIINKALKENKSIQELSSIYIESYTRDLNALNVKKPSLEPKASEYLDAMVGMIETLLEKNIAYQVSNGDIYLDTSKDKDYGSLSVHNSSIEFGRIGLVQEKRLEQDFVLWKSYKGDNDVGFDSPLGKGRPGWHIECSSMVFETLALTNTPYQIDIHAGGADLLFPHHENEACQTRCAFGVELAKYWMHNGFVNINNEKMSKSLGNSFFVKDALKNYDGEILRNYLLGVHYRSVLNFNEEDLLVSKKRLDKIYRLKQRVLGTLGGINPNFKKEILECMQDDLNVSKALSVLESMLSSTNEKLDQNPKNKALKGEILANLKFIEELLGIGFKDPSAYFQLGVSESEKQEIENKIEERKRAKERKDFLKADSIREELLKQKIALMDTPQGTIWEKFF.

Cys-27 serves as a coordination point for Zn(2+). A 'HIGH' region motif is present at residues 29–39; it reads PTVYDDAHLGH. Positions 207, 237, and 241 each coordinate Zn(2+). A 'KMSKS' region motif is present at residues 269–273; sequence KMSKS. Lys-272 serves as a coordination point for ATP.

It belongs to the class-I aminoacyl-tRNA synthetase family. Monomer. It depends on Zn(2+) as a cofactor.

The protein localises to the cytoplasm. The enzyme catalyses tRNA(Cys) + L-cysteine + ATP = L-cysteinyl-tRNA(Cys) + AMP + diphosphate. The polypeptide is Cysteine--tRNA ligase (cysS) (Helicobacter pylori (strain ATCC 700392 / 26695) (Campylobacter pylori)).